Consider the following 1372-residue polypeptide: Paired amphipathic helix protein Sin3-like 1 (1372 aa).

A disordered region spans residues 1–50 (MKRIRDDVYASGSQFRRPLGSSRGQLCGQSPVHGSGDTEEEEEGGSRRVS). PAH domains follow at residues 51–121 (QKLT…LPKG) and 136–206 (KTVE…LPAS). Residues 210–222 (HSAAQHSRSQAQQ) are compositionally biased toward low complexity. Disordered regions lie at residues 210–244 (HSAA…ERRR) and 272–323 (REQR…SGSA). The segment covering 272–315 (REQRKRLDKENRARRGRDLDDREAGQDNLHHFPEKRKSSRRAEA) has biased composition (basic and acidic residues). Positions 331-400 (LKSMYKQAFV…DEFNQFFERC (70 aa)) constitute a PAH 3 domain. Disordered stretches follow at residues 764–783 (DVNH…GGDT), 791–817 (LKSA…NKDS), and 934–1056 (GLRS…AEGM). Basic and acidic residues predominate over residues 938 to 957 (DSSKGTRNSDDPEGPSRNEK). Acidic residues-rich tracts occupy residues 990–1013 (AEAE…DSEN) and 1028–1042 (SQDE…EHDE). Position 1049 is a phosphoserine (Ser-1049).

In terms of assembly, interacts (via PAH3) with ALY2. Interacts (via PAH2) with TBP1. Interacts with ALY3, GATA21, TRP2, TKI1, VAL1, SKP1B, FBX5 and PUB14.

The protein localises to the nucleus. Its function is as follows. Acts as a transcriptional repressor. A histone deacetylase (HDAC) activity is required for transcription repression. May play a role in telomere stability. The polypeptide is Paired amphipathic helix protein Sin3-like 1 (SNL1) (Arabidopsis thaliana (Mouse-ear cress)).